The chain runs to 725 residues: Ribosomal RNA large subunit methyltransferase K/L (725 aa).

The 112-residue stretch at 46 to 157 (VAYRLCLWSR…RGQATLSLDL (112 aa)) folds into the THUMP domain. Positions 393 to 412 (TGERGERNDDGQARAPSEPA) are disordered. Residues 395 to 404 (ERGERNDDGQ) show a composition bias toward basic and acidic residues.

This sequence belongs to the methyltransferase superfamily. RlmKL family.

The protein resides in the cytoplasm. The catalysed reaction is guanosine(2445) in 23S rRNA + S-adenosyl-L-methionine = N(2)-methylguanosine(2445) in 23S rRNA + S-adenosyl-L-homocysteine + H(+). It catalyses the reaction guanosine(2069) in 23S rRNA + S-adenosyl-L-methionine = N(2)-methylguanosine(2069) in 23S rRNA + S-adenosyl-L-homocysteine + H(+). Functionally, specifically methylates the guanine in position 2445 (m2G2445) and the guanine in position 2069 (m7G2069) of 23S rRNA. This chain is Ribosomal RNA large subunit methyltransferase K/L, found in Pseudomonas paraeruginosa (strain DSM 24068 / PA7) (Pseudomonas aeruginosa (strain PA7)).